The following is a 102-amino-acid chain: Large ribosomal subunit protein bL21 (102 aa).

This sequence belongs to the bacterial ribosomal protein bL21 family. Part of the 50S ribosomal subunit. Contacts protein L20.

Functionally, this protein binds to 23S rRNA in the presence of protein L20. The polypeptide is Large ribosomal subunit protein bL21 (Saccharopolyspora erythraea (strain ATCC 11635 / DSM 40517 / JCM 4748 / NBRC 13426 / NCIMB 8594 / NRRL 2338)).